A 553-amino-acid polypeptide reads, in one-letter code: CTP synthase (553 aa).

The tract at residues 1–270 is amidoligase domain; it reads MTKYVFVTGG…DDLICRELEL (270 aa). Residue serine 13 coordinates CTP. Serine 13 contacts UTP. Residues 14–19 and aspartate 71 each bind ATP; that span reads SLGKGI. Positions 71 and 144 each coordinate Mg(2+). CTP contacts are provided by residues 151–153, 191–196, and lysine 227; these read DIE and KTKPTQ. UTP is bound by residues 191–196 and lysine 227; that span reads KTKPTQ. The region spanning 295-547 is the Glutamine amidotransferase type-1 domain; sequence TIGMVGKYVE…IKAALIHQDA (253 aa). Glycine 356 is a binding site for L-glutamine. Cysteine 383 acts as the Nucleophile; for glutamine hydrolysis in catalysis. L-glutamine is bound by residues 384–387, glutamate 407, and arginine 473; that span reads LGMQ. Catalysis depends on residues histidine 520 and glutamate 522.

The protein belongs to the CTP synthase family. In terms of assembly, homotetramer.

The catalysed reaction is UTP + L-glutamine + ATP + H2O = CTP + L-glutamate + ADP + phosphate + 2 H(+). It carries out the reaction L-glutamine + H2O = L-glutamate + NH4(+). The enzyme catalyses UTP + NH4(+) + ATP = CTP + ADP + phosphate + 2 H(+). It functions in the pathway pyrimidine metabolism; CTP biosynthesis via de novo pathway; CTP from UDP: step 2/2. Its activity is regulated as follows. Allosterically activated by GTP, when glutamine is the substrate; GTP has no effect on the reaction when ammonia is the substrate. The allosteric effector GTP functions by stabilizing the protein conformation that binds the tetrahedral intermediate(s) formed during glutamine hydrolysis. Inhibited by the product CTP, via allosteric rather than competitive inhibition. Functionally, catalyzes the ATP-dependent amination of UTP to CTP with either L-glutamine or ammonia as the source of nitrogen. Regulates intracellular CTP levels through interactions with the four ribonucleotide triphosphates. In Polynucleobacter asymbioticus (strain DSM 18221 / CIP 109841 / QLW-P1DMWA-1) (Polynucleobacter necessarius subsp. asymbioticus), this protein is CTP synthase.